The sequence spans 166 residues: Regulator of ribonuclease activity A (166 aa).

The protein belongs to the RraA family. As to quaternary structure, homotrimer. Binds to both RNA-binding sites in the C-terminal region of Rne and to RhlB.

The protein localises to the cytoplasm. Functionally, globally modulates RNA abundance by binding to RNase E (Rne) and regulating its endonucleolytic activity. Can modulate Rne action in a substrate-dependent manner by altering the composition of the degradosome. Modulates RNA-binding and helicase activities of the degradosome. This is Regulator of ribonuclease activity A from Histophilus somni (strain 129Pt) (Haemophilus somnus).